The sequence spans 307 residues: tRNA N(3)-methylcytidine methyltransferase trm140 (307 aa).

Residues tryptophan 83, tyrosine 87, glycine 125, aspartate 150, aspartate 176, leucine 177, and isoleucine 197 each coordinate S-adenosyl-L-methionine.

Belongs to the methyltransferase superfamily. METL family.

It carries out the reaction cytidine(32) in tRNA(Thr) + S-adenosyl-L-methionine = N(3)-methylcytidine(32) in tRNA(Thr) + S-adenosyl-L-homocysteine + H(+). S-adenosyl-L-methionine-dependent methyltransferase that mediates N(3)-methylcytidine modification of residue 32 of the tRNA anticodon loop of tRNA(Thr). Does not catalyze N(3)-methylcytidine modification of tRNA(Ser). The sequence is that of tRNA N(3)-methylcytidine methyltransferase trm140 from Schizosaccharomyces pombe (strain 972 / ATCC 24843) (Fission yeast).